A 211-amino-acid chain; its full sequence is Troponin I, cardiac muscle (211 aa).

Residues methionine 1–serine 23 are disordered. Alanine 2 carries the post-translational modification N-acetylalanine. The residue at position 5 (serine 5) is a Phosphoserine. Phosphoserine; by PKA and PKD/PRKD1 occurs at positions 23 and 24. The residue at position 27 (tyrosine 27) is a Phosphotyrosine. Residue threonine 32 is modified to Phosphothreonine; by STK4/MST1. The interval glutamate 33 to arginine 80 is involved in binding TNC. 2 positions are modified to phosphoserine; by PKC/PRKCE: serine 43 and serine 45. A Phosphothreonine; by STK4/MST1 modification is found at threonine 52. Residue serine 78 is modified to Phosphoserine. Threonine 79 bears the Phosphothreonine mark. A phosphothreonine; by STK4/MST1 mark is found at threonine 130 and threonine 144. Residues threonine 130–isoleucine 150 are involved in binding TNC and actin. Residue serine 151 is modified to Phosphoserine; by PAK3. Serine 167 is subject to Phosphoserine. At threonine 182 the chain carries Phosphothreonine. A Phosphoserine modification is found at serine 200.

The protein belongs to the troponin I family. Binds to actin and tropomyosin. Interacts with TRIM63. Interacts with STK4/MST1. Phosphorylated at Ser-23 and Ser-24 by PRKD1; phosphorylation reduces myofilament calcium sensitivity. Phosphorylated preferentially at Thr-32. Phosphorylation by STK4/MST1 alters its binding affinity to TNNC1 (cardiac Tn-C) and TNNT2 (cardiac Tn-T). Phosphorylated at Ser-43 and Ser-45 by PRKCE; phosphorylation increases myocardium contractile dysfunction.

Troponin I is the inhibitory subunit of troponin, the thin filament regulatory complex which confers calcium-sensitivity to striated muscle actomyosin ATPase activity. The protein is Troponin I, cardiac muscle (TNNI3) of Canis lupus familiaris (Dog).